The following is a 227-amino-acid chain: MDVDIDPEQLFTEKMPKNYAQPDVLNHTFDLLSNLHKLLPNHLVEVLHSYRSEEDKNKCEKPEFSGLEKILARHQLPKEISLSPKPSLMPSWRRRIINNISGNWKKCHLWQKSTYEPPMGTIVARWTKKNLQPTEDLKSVIQRLSALGPIISVTPSGRQSAVVVFRDITSACKAVSAFQSMSGGSMFQCSWQHRFMAKNKTWSRKCTSKVHLEKRESTVGEPQELHN.

In terms of tissue distribution, expressed predominantly in the testis.

The protein is Testis expressed protein 56 of Mus musculus (Mouse).